A 496-amino-acid chain; its full sequence is Angiopoietin-2 (496 aa).

The signal sequence occupies residues 1-18 (MWQIIFLTFGWDLVLASA). N89, N119, N133, N151, N240, and N304 each carry an N-linked (GlcNAc...) asparagine glycan. A coiled-coil region spans residues 159–256 (QLLQHSISTN…QQHDLMETVN (98 aa)). One can recognise a Fibrinogen C-terminal domain in the interval 275 to 495 (KEEQTTFRDC…ATTMMIRPAD (221 aa)). Residues C284 and C313 are joined by a disulfide bond. Positions 429, 431, 433, and 435 each coordinate Ca(2+). 2 cysteine pairs are disulfide-bonded: C433–C435 and C437–C450.

Interacts with TEK/TIE2, competing for the same binding site as ANGPT1. Interacts with ITGA5. Interacts with SVEP1/polydom. Interacts with THBD; this interaction significantly inhibits the generation of activated PC and TAFIa/CPB2 by the thrombin/thrombomodulin complex. Expressed in the ovary, uterus and placenta.

It localises to the secreted. Binds to TEK/TIE2, competing for the ANGPT1 binding site, and modulating ANGPT1 signaling. Can induce tyrosine phosphorylation of TEK/TIE2 in the absence of ANGPT1. In the absence of angiogenic inducers, such as VEGF, ANGPT2-mediated loosening of cell-matrix contacts may induce endothelial cell apoptosis with consequent vascular regression. In concert with VEGF, it may facilitate endothelial cell migration and proliferation, thus serving as a permissive angiogenic signal. Involved in the regulation of lymphangiogenesis. This Mus musculus (Mouse) protein is Angiopoietin-2 (Angpt2).